The primary structure comprises 718 residues: ATP-dependent RNA helicase homolog DQX1 (718 aa).

The Helicase ATP-binding domain maps to 54–222 (HLESSPTGVV…WGNSPIVRVP (169 aa)). 67–74 (GDPGSGKS) contacts ATP. A DEAQ box motif is present at residues 167–170 (DEAQ). In terms of domain architecture, Helicase C-terminal spans 245–447 (ACQAVLELCQ…ALMRALEDLD (203 aa)). Positions 690–718 (QLREGTAEPPAAATETSSPQEYGDGCVLQ) are disordered. Positions 696 to 708 (AEPPAAATETSSP) are enriched in low complexity.

As to expression, ubiquitous.

It localises to the nucleus. In terms of biological role, might be involved in RNA metabolism; it is missing helicase motif III and may not have helicase activity. The sequence is that of ATP-dependent RNA helicase homolog DQX1 (Dqx1) from Mus musculus (Mouse).